A 210-amino-acid chain; its full sequence is 2,3-bisphosphoglycerate-dependent phosphoglycerate mutase (210 aa).

Residues Arg9–Asn16, Thr22–Gly23, Arg61, Glu88–Tyr91, Lys99, Arg115–Arg116, and Gly159–Asn160 contribute to the substrate site. Catalysis depends on His10, which acts as the Tele-phosphohistidine intermediate. Glu88 serves as the catalytic Proton donor/acceptor.

The protein belongs to the phosphoglycerate mutase family. BPG-dependent PGAM subfamily. In terms of assembly, homodimer.

It carries out the reaction (2R)-2-phosphoglycerate = (2R)-3-phosphoglycerate. The protein operates within carbohydrate degradation; glycolysis; pyruvate from D-glyceraldehyde 3-phosphate: step 3/5. In terms of biological role, catalyzes the interconversion of 2-phosphoglycerate and 3-phosphoglycerate. This chain is 2,3-bisphosphoglycerate-dependent phosphoglycerate mutase, found in Parvibaculum lavamentivorans (strain DS-1 / DSM 13023 / NCIMB 13966).